Reading from the N-terminus, the 276-residue chain is Rhomboid protease GlpG (276 aa).

The next 6 membrane-spanning stretches (helical) occupy residues 94 to 114, 142 to 162, 169 to 189, 192 to 212, 229 to 249, and 250 to 270; these read GPVTWIVMLACVLVYIAMSLI, IFMHFSLMHILFNLLWWWYLG, LGSGKLIVITVISALLSGYVQ, FSGPWFGGLSGVVYALMGYVW, LIIFALLWIVAGWFDWFGMSM, and ANGAHIAGLIVGLAMAFVDTL. Residue Ser-201 is the Nucleophile of the active site. Residue His-254 is part of the active site.

It belongs to the peptidase S54 family.

The protein resides in the cell inner membrane. The enzyme catalyses Cleaves type-1 transmembrane domains using a catalytic dyad composed of serine and histidine that are contributed by different transmembrane domains.. Its function is as follows. Rhomboid-type serine protease that catalyzes intramembrane proteolysis. The polypeptide is Rhomboid protease GlpG (Salmonella agona (strain SL483)).